A 186-amino-acid chain; its full sequence is Ribosome-recycling factor (186 aa).

It belongs to the RRF family.

The protein resides in the cytoplasm. Responsible for the release of ribosomes from messenger RNA at the termination of protein biosynthesis. May increase the efficiency of translation by recycling ribosomes from one round of translation to another. This Rickettsia akari (strain Hartford) protein is Ribosome-recycling factor.